Consider the following 87-residue polypeptide: Small ribosomal subunit protein bS20 (87 aa).

The segment covering 1–11 (MANIKSKKKRI) has biased composition (basic residues). Positions 1 to 25 (MANIKSKKKRIKTNEKARQRNKAIR) are disordered.

The protein belongs to the bacterial ribosomal protein bS20 family.

Its function is as follows. Binds directly to 16S ribosomal RNA. The chain is Small ribosomal subunit protein bS20 from Corynebacterium kroppenstedtii (strain DSM 44385 / JCM 11950 / CIP 105744 / CCUG 35717).